Here is a 197-residue protein sequence, read N- to C-terminus: Elongation factor Ts (197 aa).

The involved in Mg(2+) ion dislocation from EF-Tu stretch occupies residues threonine 81–valine 84.

This sequence belongs to the EF-Ts family.

The protein resides in the cytoplasm. Functionally, associates with the EF-Tu.GDP complex and induces the exchange of GDP to GTP. It remains bound to the aminoacyl-tRNA.EF-Tu.GTP complex up to the GTP hydrolysis stage on the ribosome. This Sulfurihydrogenibium sp. (strain YO3AOP1) protein is Elongation factor Ts.